Consider the following 327-residue polypeptide: Phenylalanine--tRNA ligase alpha subunit (327 aa).

E252 is a Mg(2+) binding site.

The protein belongs to the class-II aminoacyl-tRNA synthetase family. Phe-tRNA synthetase alpha subunit type 1 subfamily. In terms of assembly, tetramer of two alpha and two beta subunits. Mg(2+) serves as cofactor.

It localises to the cytoplasm. The enzyme catalyses tRNA(Phe) + L-phenylalanine + ATP = L-phenylalanyl-tRNA(Phe) + AMP + diphosphate + H(+). This Shewanella baltica (strain OS223) protein is Phenylalanine--tRNA ligase alpha subunit.